A 341-amino-acid chain; its full sequence is Glycerol-3-phosphate dehydrogenase [NAD(P)+] 1 (341 aa).

NADPH contacts are provided by Ser-11, Trp-12, Arg-32, Arg-33, and Lys-106. Residues Lys-106, Gly-137, and Ser-139 each coordinate sn-glycerol 3-phosphate. Ala-141 contacts NADPH. Sn-glycerol 3-phosphate is bound by residues Lys-192, Asp-245, Ser-255, Arg-256, and Asn-257. Lys-192 functions as the Proton acceptor in the catalytic mechanism. Residue Arg-256 coordinates NADPH. Residues Val-280 and Glu-282 each coordinate NADPH.

Belongs to the NAD-dependent glycerol-3-phosphate dehydrogenase family.

Its subcellular location is the cytoplasm. It catalyses the reaction sn-glycerol 3-phosphate + NAD(+) = dihydroxyacetone phosphate + NADH + H(+). The catalysed reaction is sn-glycerol 3-phosphate + NADP(+) = dihydroxyacetone phosphate + NADPH + H(+). It participates in membrane lipid metabolism; glycerophospholipid metabolism. Functionally, catalyzes the reduction of the glycolytic intermediate dihydroxyacetone phosphate (DHAP) to sn-glycerol 3-phosphate (G3P), the key precursor for phospholipid synthesis. This Salinibacter ruber (strain DSM 13855 / M31) protein is Glycerol-3-phosphate dehydrogenase [NAD(P)+] 1.